Reading from the N-terminus, the 94-residue chain is Nucleoid-associated protein MYPE8070 (94 aa).

Belongs to the YbaB/EbfC family. Homodimer.

The protein resides in the cytoplasm. It localises to the nucleoid. Functionally, binds to DNA and alters its conformation. May be involved in regulation of gene expression, nucleoid organization and DNA protection. The polypeptide is Nucleoid-associated protein MYPE8070 (Malacoplasma penetrans (strain HF-2) (Mycoplasma penetrans)).